The chain runs to 351 residues: Serine protease inhibitor dipetalogastin (351 aa).

Residues leucine 1 to leucine 131 constitute a propeptide that is removed on maturation. Kazal-like domains follow at residues lysine 19 to glutamate 69, histidine 72 to alanine 122, leucine 131 to glutamate 181, histidine 184 to proline 234, glutamine 240 to valine 289, and glycine 297 to proline 347. 18 disulfide bridges follow: cysteine 25-cysteine 50, cysteine 27-cysteine 46, cysteine 35-cysteine 67, cysteine 78-cysteine 103, cysteine 80-cysteine 99, cysteine 88-cysteine 120, cysteine 137-cysteine 162, cysteine 139-cysteine 158, cysteine 147-cysteine 179, cysteine 190-cysteine 215, cysteine 192-cysteine 211, cysteine 200-cysteine 232, cysteine 246-cysteine 271, cysteine 248-cysteine 267, cysteine 256-cysteine 287, cysteine 303-cysteine 328, cysteine 305-cysteine 324, and cysteine 313-cysteine 345.

Its subcellular location is the secreted. Thrombin inhibitor. Prevents blood clotting to allow insect to feed on blood. Also functions as an inhibitor of trypsin and plasmin. The protein is Serine protease inhibitor dipetalogastin of Dipetalogaster maximus (Blood-sucking bug).